Here is a 326-residue protein sequence, read N- to C-terminus: Acetyl-coenzyme A carboxylase carboxyl transferase subunit alpha (326 aa).

In terms of domain architecture, CoA carboxyltransferase C-terminal spans 46–300 (EIEARAAELR…KEALLRHLDE (255 aa)).

It belongs to the AccA family. In terms of assembly, acetyl-CoA carboxylase is a heterohexamer composed of biotin carboxyl carrier protein (AccB), biotin carboxylase (AccC) and two subunits each of ACCase subunit alpha (AccA) and ACCase subunit beta (AccD).

It is found in the cytoplasm. The catalysed reaction is N(6)-carboxybiotinyl-L-lysyl-[protein] + acetyl-CoA = N(6)-biotinyl-L-lysyl-[protein] + malonyl-CoA. The protein operates within lipid metabolism; malonyl-CoA biosynthesis; malonyl-CoA from acetyl-CoA: step 1/1. Functionally, component of the acetyl coenzyme A carboxylase (ACC) complex. First, biotin carboxylase catalyzes the carboxylation of biotin on its carrier protein (BCCP) and then the CO(2) group is transferred by the carboxyltransferase to acetyl-CoA to form malonyl-CoA. In Gloeobacter violaceus (strain ATCC 29082 / PCC 7421), this protein is Acetyl-coenzyme A carboxylase carboxyl transferase subunit alpha.